A 424-amino-acid chain; its full sequence is Hemagglutinin-esterase (424 aa).

The signal sequence occupies residues 1 to 16 (MFLLPRFCLVCSIIST). The interval 7-127 (FCLVCSIIST…NNDIWMQNKG (121 aa)) is esterase domain 1. Topologically, residues 17–392 (FGFQNPPTNV…PICVYDPLPI (376 aa)) are virion surface. The active-site Nucleophile is Ser-40. Cys-44 and Cys-65 are oxidised to a cystine. Asn-54, Asn-89, Asn-153, Asn-236, and Asn-301 each carry an N-linked (GlcNAc...) asparagine; by host glycan. 3 disulfides stabilise this stretch: Cys-113–Cys-162, Cys-197–Cys-276, and Cys-205–Cys-249. Residues 128–266 (LFYTQVYKKM…GNYLAISNEL (139 aa)) form a receptor binding region. Residues 267–379 (LLTVPTKAIC…NCPTAASIIS (113 aa)) form an esterase domain 2 region. An intrachain disulfide couples Cys-307 to Cys-312. Residue Asn-316 is glycosylated (N-linked (GlcNAc...) asparagine; by host). Residues Asp-326 and His-329 each act as charge relay system in the active site. Residues Cys-347 and Cys-371 are joined by a disulfide bond. Asn-358 is a glycosylation site (N-linked (GlcNAc...) asparagine; by host). Residues 393 to 413 (ILLGILLGVAVIVIVVLLLYF) form a helical membrane-spanning segment. Residues 414 to 424 (MVDNGIRQHYA) are Intravirion-facing.

Belongs to the influenza type C/coronaviruses hemagglutinin-esterase family. As to quaternary structure, homodimer; disulfide-linked. Forms a complex with the M protein in the pre-Golgi. Associates then with S-M complex to form a ternary complex S-M-HE. Post-translationally, N-glycosylated in the host RER.

Its subcellular location is the virion membrane. The protein resides in the host cell membrane. It carries out the reaction N-acetyl-9-O-acetylneuraminate + H2O = N-acetylneuraminate + acetate + H(+). The enzyme catalyses N-acetyl-4-O-acetylneuraminate + H2O = N-acetylneuraminate + acetate + H(+). Structural protein that makes short spikes at the surface of the virus. Contains receptor binding and receptor-destroying activities. Mediates de-O-acetylation of N-acetyl-4-O-acetylneuraminic acid, which is probably the receptor determinant recognized by the virus on the surface of erythrocytes and susceptible cells. This receptor-destroying activity is important for virus release as it probably helps preventing self-aggregation and ensures the efficient spread of the progeny virus from cell to cell. May serve as a secondary viral attachment protein for initiating infection, the spike protein being the major one. May become a target for both the humoral and the cellular branches of the immune system. This is Hemagglutinin-esterase from Sus scrofa (Pig).